The primary structure comprises 322 residues: Arginase (322 aa).

Residues His-113, Asp-141, His-143, and Asp-145 each coordinate Mn(2+). Residues 143–147, 154–156, and Asp-200 each bind substrate; these read HADIN and SGN. Positions 247 and 249 each coordinate Mn(2+). Substrate contacts are provided by Thr-261 and Glu-292.

The protein belongs to the arginase family. As to quaternary structure, homotrimer. It depends on Mn(2+) as a cofactor.

It catalyses the reaction L-arginine + H2O = urea + L-ornithine. The protein operates within nitrogen metabolism; urea cycle; L-ornithine and urea from L-arginine: step 1/1. The polypeptide is Arginase (ARG) (Coccidioides posadasii (strain C735) (Valley fever fungus)).